The sequence spans 367 residues: Putative transport protein MT0215 (367 aa).

Transmembrane regions (helical) follow at residues 18–38, 41–61, 74–94, 161–181, 228–248, 249–269, 270–290, 314–334, and 337–357; these read AAWA…LWVL, FEVI…LVPP, VAVT…LTFV, ITEL…FLYG, AGVG…LASL, VFFG…LAVV, VALL…LIAV, VVLA…LLAV, and VAFF…ADVA.

This sequence belongs to the autoinducer-2 exporter (AI-2E) (TC 2.A.86) family.

It is found in the cell membrane. In Mycobacterium tuberculosis (strain CDC 1551 / Oshkosh), this protein is Putative transport protein MT0215.